The chain runs to 366 residues: Methylthioribose-1-phosphate isomerase (366 aa).

Residues 53-55, Arg-90, and Gln-203 each bind substrate; that span reads RGA. Asp-244 (proton donor) is an active-site residue. 254 to 255 lines the substrate pocket; that stretch reads NK.

This sequence belongs to the eIF-2B alpha/beta/delta subunits family. MtnA subfamily.

The catalysed reaction is 5-(methylsulfanyl)-alpha-D-ribose 1-phosphate = 5-(methylsulfanyl)-D-ribulose 1-phosphate. Its pathway is amino-acid biosynthesis; L-methionine biosynthesis via salvage pathway; L-methionine from S-methyl-5-thio-alpha-D-ribose 1-phosphate: step 1/6. Its function is as follows. Catalyzes the interconversion of methylthioribose-1-phosphate (MTR-1-P) into methylthioribulose-1-phosphate (MTRu-1-P). This Methylocella silvestris (strain DSM 15510 / CIP 108128 / LMG 27833 / NCIMB 13906 / BL2) protein is Methylthioribose-1-phosphate isomerase.